The primary structure comprises 344 residues: Probable dual-specificity RNA methyltransferase RlmN (344 aa).

The active-site Proton acceptor is Glu83. The 235-residue stretch at 89-323 (YLDRKTICVS…VSVRRSRGKD (235 aa)) folds into the Radical SAM core domain. A disulfide bond links Cys96 and Cys328. [4Fe-4S] cluster is bound by residues Cys103, Cys107, and Cys110. Residues 153–154 (GE), Ser185, 209–211 (SLH), and Asn285 contribute to the S-adenosyl-L-methionine site. Cys328 functions as the S-methylcysteine intermediate in the catalytic mechanism.

It belongs to the radical SAM superfamily. RlmN family. Requires [4Fe-4S] cluster as cofactor.

The protein resides in the cytoplasm. The catalysed reaction is adenosine(2503) in 23S rRNA + 2 reduced [2Fe-2S]-[ferredoxin] + 2 S-adenosyl-L-methionine = 2-methyladenosine(2503) in 23S rRNA + 5'-deoxyadenosine + L-methionine + 2 oxidized [2Fe-2S]-[ferredoxin] + S-adenosyl-L-homocysteine. It catalyses the reaction adenosine(37) in tRNA + 2 reduced [2Fe-2S]-[ferredoxin] + 2 S-adenosyl-L-methionine = 2-methyladenosine(37) in tRNA + 5'-deoxyadenosine + L-methionine + 2 oxidized [2Fe-2S]-[ferredoxin] + S-adenosyl-L-homocysteine. Functionally, specifically methylates position 2 of adenine 2503 in 23S rRNA and position 2 of adenine 37 in tRNAs. This Deinococcus geothermalis (strain DSM 11300 / CIP 105573 / AG-3a) protein is Probable dual-specificity RNA methyltransferase RlmN.